Consider the following 125-residue polypeptide: uncharacterized protein (125 aa).

This is an uncharacterized protein from Saccharomyces cerevisiae (strain ATCC 204508 / S288c) (Baker's yeast).